The chain runs to 439 residues: Ribosomal protein uS12 methylthiotransferase RimO (439 aa).

Residues 3–118 (KKFYITTLGC…AGKILREKFP (116 aa)) enclose the MTTase N-terminal domain. C12, C48, C81, C157, C161, and C164 together coordinate [4Fe-4S] cluster. Residues 143-370 (NYSKPYAYVK…RDVHLAILEE (228 aa)) form the Radical SAM core domain. In terms of domain architecture, TRAM spans 373–438 (ESRIGQTYDA…EYDMNGTWIS (66 aa)).

This sequence belongs to the methylthiotransferase family. RimO subfamily. [4Fe-4S] cluster serves as cofactor.

It localises to the cytoplasm. It carries out the reaction L-aspartate(89)-[ribosomal protein uS12]-hydrogen + (sulfur carrier)-SH + AH2 + 2 S-adenosyl-L-methionine = 3-methylsulfanyl-L-aspartate(89)-[ribosomal protein uS12]-hydrogen + (sulfur carrier)-H + 5'-deoxyadenosine + L-methionine + A + S-adenosyl-L-homocysteine + 2 H(+). In terms of biological role, catalyzes the methylthiolation of an aspartic acid residue of ribosomal protein uS12. In Leptospira borgpetersenii serovar Hardjo-bovis (strain L550), this protein is Ribosomal protein uS12 methylthiotransferase RimO.